Consider the following 299-residue polypeptide: MAPTSTPQTPFGRVLTAMVTPFTADGALDLDGAQRLAAHLVDAGNDGLIINGTTGESPTTSDAEKADLVRAVVEAVGDRAHVVAGVGTNNTQHSIELARAAERVGAHGLLLVTPYYNKPPQEGLYLHFTAIADAAGLPVMLYDIPGRSGVPINTETLVRLAEHPRIVANKDAKGDLGRASWAIARSGLAWYSGDDMLNLPLLAVGAVGFVSVVGHVVTPELRAMVDAHVAGDVQKALEIHQKLLPVFTGMFRTQGVMTTKGALALQGLPAGPLRAPMVGLTPEETEQLKIDLAAGGVQL.

Pyruvate is bound at residue Thr54. Tyr142 functions as the Proton donor/acceptor in the catalytic mechanism. Lys170 serves as the catalytic Schiff-base intermediate with substrate. Val210 lines the pyruvate pocket.

Belongs to the DapA family. Homotetramer; dimer of dimers.

It localises to the cytoplasm. It catalyses the reaction L-aspartate 4-semialdehyde + pyruvate = (2S,4S)-4-hydroxy-2,3,4,5-tetrahydrodipicolinate + H2O + H(+). It functions in the pathway amino-acid biosynthesis; L-lysine biosynthesis via DAP pathway; (S)-tetrahydrodipicolinate from L-aspartate: step 3/4. Its function is as follows. Catalyzes the condensation of (S)-aspartate-beta-semialdehyde [(S)-ASA] and pyruvate to 4-hydroxy-tetrahydrodipicolinate (HTPA). The chain is 4-hydroxy-tetrahydrodipicolinate synthase 2 from Streptomyces coelicolor (strain ATCC BAA-471 / A3(2) / M145).